A 1064-amino-acid chain; its full sequence is MRTWLLAVLLLSVIAVTYGQGECDSDPCENGSTCQEGEGSYICQCPMGYDGQNCDRFTGSNCGYNVFDANGMIDSPNYPAMYNNRADCLYLVRITKARSITFTIEDFMTEVFKDVVEYGIGPEADFNQALGSFEGNLTQDDVIPAPFTVQGDQAWFIFSTDRNIVNRGFRITFSSDGDDCDPNLCQNGAACTDLVNDYACTCPPGFTGRNCEIDIDECASDPCQNGGACVDGVNGYVCNCVPGFDGDECENNINECASSPCLNGGICVDGVNMFECTCLAGFTGVRCEVNIDECASAPCQNGGICIDGINGYTCSCPLGFSGDNCENNDDECSSIPCLNGGTCVDLVNAYMCVCAPGWTGPTCADNIDECASAPCQNGGVCIDGVNGYMCDCQPGYTGTHCETDIDECARPPCQNGGDCVDGVNGYVCICAPGFDGLNCENNIDECASRPCQNGAVCVDGVNGFVCTCSAGYTGVLCETDINECASMPCLNGGVCTDLVNGYICTCAAGFEGTNCETDTDECASFPCQNGATCTDQVNGYVCTCVPGYTGVLCETDINECASFPCLNGGTCNDQVNGYVCVCAQDTSVSTCETDRDECASAPCLNGGACMDVVNGFVCTCLPGWEGTNCEINTDECASSPCMNGGLCVDQVNSYVCFCLPGFTGIHCGTEIDECASSPCLNGGQCIDRVDSYECVCAAGYTAVRCQINIDECASAPCQNGGVCVDGVNGYVCNCAPGYTGDNCETEIDECASMPCLNGGACIEMVNGYTCQCVAGYTGVICETDIDECASAPCQNGGVCTDTINGYICACVPGFTGSNCETNIDECASDPCLNGGICVDGVNGFVCQCPPNYSGTYCEISLDACRSMPCQNGATCVNVGADYVCECVPGYAGQNCEIDINECASLPCQNGGLCIDGIAGYTCQCRLGYIGVNCEEVGFCDLEGMWYNECNDQVTITKTSTGMMLGDYMTYNERALGYAAPTVVVGYASNNYDFPSFGFTVVRDNGQSTTSWTGQCHLCDGEEVLYTTWINTNMVSTCQDIKKSNMVGQDKWTRYEQSIAPQPDA.

Positions 1–19 (MRTWLLAVLLLSVIAVTYG) are cleaved as a signal peptide. Positions 20–55 (QGECDSDPCENGSTCQEGEGSYICQCPMGYDGQNCD) constitute an EGF-like 1 domain. 4 cysteine pairs are disulfide-bonded: C23–C34, C28–C43, C45–C54, and C62–C88. An N-linked (GlcNAc...) asparagine glycan is attached at N30. The CUB domain occupies 62-175 (CGYNVFDANG…NRGFRITFSS (114 aa)). A glycan (N-linked (GlcNAc...) asparagine) is linked at N136. The EGF-like 2; calcium-binding domain occupies 176–212 (DGDDCDPNLCQNGAACTDLVNDYACTCPPGFTGRNCE). Cystine bridges form between C180–C191, C185–C200, C202–C211, C218–C229, C223–C238, C240–C249, C256–C267, C261–C276, C278–C287, C294–C305, C299–C314, C316–C325, C332–C343, C337–C352, C354–C363, C370–C381, C375–C390, C392–C401, C408–C419, C413–C428, C430–C439, C446–C457, C451–C466, C468–C477, C484–C495, C489–C504, C506–C515, C522–C533, C527–C542, C544–C553, C560–C571, C565–C580, C582–C591, C598–C609, C603–C618, C620–C629, C636–C647, C641–C656, C658–C667, C674–C685, C679–C694, C696–C705, C712–C723, C717–C732, C734–C743, C750–C761, C755–C770, C772–C781, C788–C799, C793–C808, C810–C819, C826–C837, C831–C846, C848–C857, C864–C875, C869–C884, C886–C895, C902–C913, C907–C922, C924–C933, and C939–C1015. In terms of domain architecture, EGF-like 3; calcium-binding spans 214–250 (DIDECASDPCQNGGACVDGVNGYVCNCVPGFDGDECE). An EGF-like 4; calcium-binding domain is found at 252-288 (NINECASSPCLNGGICVDGVNMFECTCLAGFTGVRCE). Positions 290 to 326 (NIDECASAPCQNGGICIDGINGYTCSCPLGFSGDNCE) constitute an EGF-like 5; calcium-binding domain. Residues 328 to 364 (NDDECSSIPCLNGGTCVDLVNAYMCVCAPGWTGPTCA) form the EGF-like 6; calcium-binding domain. One can recognise an EGF-like 7; calcium-binding domain in the interval 366-402 (NIDECASAPCQNGGVCIDGVNGYMCDCQPGYTGTHCE). Positions 404–440 (DIDECARPPCQNGGDCVDGVNGYVCICAPGFDGLNCE) constitute an EGF-like 8; calcium-binding domain. The region spanning 442 to 478 (NIDECASRPCQNGAVCVDGVNGFVCTCSAGYTGVLCE) is the EGF-like 9; calcium-binding domain. In terms of domain architecture, EGF-like 10; calcium-binding spans 480 to 516 (DINECASMPCLNGGVCTDLVNGYICTCAAGFEGTNCE). Residues 518–554 (DTDECASFPCQNGATCTDQVNGYVCTCVPGYTGVLCE) enclose the EGF-like 11; calcium-binding domain. The region spanning 556 to 592 (DINECASFPCLNGGTCNDQVNGYVCVCAQDTSVSTCE) is the EGF-like 12; calcium-binding domain. An EGF-like 13; calcium-binding domain is found at 594–630 (DRDECASAPCLNGGACMDVVNGFVCTCLPGWEGTNCE). Residues 632–668 (NTDECASSPCMNGGLCVDQVNSYVCFCLPGFTGIHCG) form the EGF-like 14; calcium-binding domain. In terms of domain architecture, EGF-like 15; calcium-binding spans 670–706 (EIDECASSPCLNGGQCIDRVDSYECVCAAGYTAVRCQ). One can recognise an EGF-like 16; calcium-binding domain in the interval 708-744 (NIDECASAPCQNGGVCVDGVNGYVCNCAPGYTGDNCE). The region spanning 746 to 782 (EIDECASMPCLNGGACIEMVNGYTCQCVAGYTGVICE) is the EGF-like 17; calcium-binding domain. The region spanning 784-820 (DIDECASAPCQNGGVCTDTINGYICACVPGFTGSNCE) is the EGF-like 18; calcium-binding domain. In terms of domain architecture, EGF-like 19; calcium-binding spans 822 to 858 (NIDECASDPCLNGGICVDGVNGFVCQCPPNYSGTYCE). N-linked (GlcNAc...) asparagine glycosylation occurs at N851. The EGF-like 20 domain maps to 860-896 (SLDACRSMPCQNGATCVNVGADYVCECVPGYAGQNCE). The region spanning 898-934 (DINECASLPCQNGGLCIDGIAGYTCQCRLGYIGVNCE) is the EGF-like 21; calcium-binding domain. An Avidin-like domain is found at 937-1056 (GFCDLEGMWY…GQDKWTRYEQ (120 aa)).

Homotetramer.

The protein resides in the secreted. The protein localises to the extracellular space. It is found in the cytoplasmic vesicle. Its subcellular location is the extracellular matrix. It localises to the hyaline layer. The protein resides in the apical lamina. In terms of biological role, forms the apical lamina, a component of the extracellular matrix. This chain is Fibropellin-1 (EGF1), found in Strongylocentrotus purpuratus (Purple sea urchin).